The sequence spans 314 residues: Ribosomal protein L11 methyltransferase (314 aa).

The S-adenosyl-L-methionine site is built by T161, G182, D204, and N248.

Belongs to the methyltransferase superfamily. PrmA family.

It localises to the cytoplasm. It catalyses the reaction L-lysyl-[protein] + 3 S-adenosyl-L-methionine = N(6),N(6),N(6)-trimethyl-L-lysyl-[protein] + 3 S-adenosyl-L-homocysteine + 3 H(+). In terms of biological role, methylates ribosomal protein L11. The chain is Ribosomal protein L11 methyltransferase from Listeria welshimeri serovar 6b (strain ATCC 35897 / DSM 20650 / CCUG 15529 / CIP 8149 / NCTC 11857 / SLCC 5334 / V8).